A 610-amino-acid chain; its full sequence is ATP-dependent zinc metalloprotease FtsH (610 aa).

At 1–5 (MNRSN) the chain is on the cytoplasmic side. The helical transmembrane segment at 6-26 (IWNLLFTILIIVTLFWLARFF) threads the bilayer. Residues 27-107 (YVENSPVSKL…SGERSGSSSF (81 aa)) lie on the Periplasmic side of the membrane. A helical transmembrane segment spans residues 108-128 (WINVLGTLIPTILFIVVWLFI). The Cytoplasmic portion of the chain corresponds to 129–610 (MRSLSGRNNQ…LSEEFEKVVE (482 aa)). Residues Gly164, 204 to 208 (GTGKT), Leu209, His343, and Glu371 contribute to the ATP site. His423 lines the Zn(2+) pocket. Residue Glu424 is part of the active site. The Zn(2+) site is built by His427 and Asp500.

In the central section; belongs to the AAA ATPase family. It in the C-terminal section; belongs to the peptidase M41 family. The isolated ADP-bound cytosolic domain forms a 6-fold symmetric protease disk and a 2-fold symmetric AAA ATPase ring. In the absence of nucleotide the AAA ATPase ring also forms symmetric hexamers. Zn(2+) is required as a cofactor.

Its subcellular location is the cell inner membrane. In terms of biological role, acts as a processive, ATP-dependent zinc metallopeptidase for both cytoplasmic and membrane proteins. Plays a role in the quality control of integral membrane proteins. This Thermotoga maritima (strain ATCC 43589 / DSM 3109 / JCM 10099 / NBRC 100826 / MSB8) protein is ATP-dependent zinc metalloprotease FtsH.